The primary structure comprises 85 residues: Glutaredoxin 1 (85 aa).

A Glutaredoxin domain is found at 1–85; sequence MQTVIFGRSG…AAWVKENLDA (85 aa). A disulfide bridge links Cys11 with Cys14.

Belongs to the glutaredoxin family. Monomer.

In terms of biological role, the disulfide bond functions as an electron carrier in the glutathione-dependent synthesis of deoxyribonucleotides by the enzyme ribonucleotide reductase. In addition, it is also involved in reducing some disulfides in a coupled system with glutathione reductase. The protein is Glutaredoxin 1 (grxA) of Shigella flexneri.